Consider the following 467-residue polypeptide: A-type ATP synthase subunit B (467 aa).

The disordered stretch occupies residues 95-114 (GKGQPRDHMPLPPPEDFRDV).

This sequence belongs to the ATPase alpha/beta chains family. Has multiple subunits with at least A(3), B(3), C, D, E, F, H, I and proteolipid K(x).

The protein resides in the cell membrane. Functionally, component of the A-type ATP synthase that produces ATP from ADP in the presence of a proton gradient across the membrane. The B chain is a regulatory subunit. The chain is A-type ATP synthase subunit B from Pyrobaculum aerophilum (strain ATCC 51768 / DSM 7523 / JCM 9630 / CIP 104966 / NBRC 100827 / IM2).